A 375-amino-acid chain; its full sequence is uncharacterized protein (375 aa).

In terms of domain architecture, Radical SAM core spans K78–P302. Positions 92, 98, and 101 each coordinate [4Fe-4S] cluster.

[4Fe-4S] cluster serves as cofactor.

This is an uncharacterized protein from Methanocaldococcus jannaschii (strain ATCC 43067 / DSM 2661 / JAL-1 / JCM 10045 / NBRC 100440) (Methanococcus jannaschii).